A 266-amino-acid polypeptide reads, in one-letter code: Beta-lactamase OXA-10 (266 aa).

The signal sequence occupies residues 1–19 (MKTFAAYVIIACLSSTALA). C44 and C51 form a disulfide bridge. S67 (acyl-ester intermediate) is an active-site residue. At K70 the chain carries N6-carboxylysine. S115, T206, F208, and R250 together coordinate a beta-lactam.

It belongs to the class-D beta-lactamase family. As to quaternary structure, dimer.

It localises to the periplasm. It carries out the reaction a beta-lactam + H2O = a substituted beta-amino acid. Its activity is regulated as follows. Activated, with respect to most beta-lactam substrates, in the presence of 0.05 M sodium bicarbonate. Class D beta-lactamase which confers resistance to the beta-lactam antibiotics, including penicillin, carbenicillin and oxacillin, and also some cephalosporins. Confers weak resistance to some carbapenems, in E.coli strain C600Z1. Acts via hydrolysis of the beta-lactam ring. Has penicillin- and cephalosporin-hydrolyzing activities. This chain is Beta-lactamase OXA-10, found in Pseudomonas aeruginosa.